Consider the following 364-residue polypeptide: Autophagy-related protein 5 (364 aa).

Residues 1 to 13 (MASPNPYSYSPQL) show a composition bias toward polar residues. The segment at 1–103 (MASPNPYSYS…SLPPKPKPSS (103 aa)) is disordered. Over residues 28–42 (SSPSFRSTPFRSSRG) the composition is skewed to low complexity. The span at 43-53 (TGAGTGIGLGL) shows a compositional bias: gly residues. A compositionally biased stretch (basic and acidic residues) spans 72-82 (RSGDGSHDDLP). Residue lysine 202 forms a Glycyl lysine isopeptide (Lys-Gly) (interchain with G-Cter in ATG12) linkage. Residues 262–306 (PSSPSPPSSDQQQPQRPGGSSSSGSYRVMQTLVPPRGPNNRTPQT) form a disordered region. Low complexity predominate over residues 269–286 (SSDQQQPQRPGGSSSSGS).

This sequence belongs to the ATG5 family. As to quaternary structure, conjugated with atg12. In terms of processing, conjugated to atg12; which is essential for autophagy.

It localises to the preautophagosomal structure membrane. Its function is as follows. Involved in cytoplasm to vacuole transport (Cvt) and autophagic vesicle formation. Autophagy is essential for maintenance of amino acid levels and protein synthesis under nitrogen starvation. Required for selective autophagic degradation of the nucleus (nucleophagy). Also required for mitophagy, which eliminates defective or superfluous mitochondria in order to fulfill cellular energy requirements and prevent excess ROS production. Conjugation with atg12, through a ubiquitin-like conjugating system involving apg-5/atg7 as an E1-like activating enzyme and atg10 as an E2-like conjugating enzyme, is essential for its function. The atg12-apg-4/atg5 conjugate acts as an E3-like enzyme which is required for lipidation of apg-6/atg8 and apg-6/atg8 association to the vesicle membranes. The protein is Autophagy-related protein 5 (apg-4) of Neurospora crassa (strain ATCC 24698 / 74-OR23-1A / CBS 708.71 / DSM 1257 / FGSC 987).